The following is a 967-amino-acid chain: Translation initiation factor IF-2 (967 aa).

The interval 34 to 363 (ASSTVEPPVA…APAVGGVSVP (330 aa)) is disordered. 2 stretches are compositionally biased toward low complexity: residues 51-96 (PAGG…GNAA) and 103-154 (ASEA…TPGP). The span at 184–196 (RSEGGAQRGGPRP) shows a compositional bias: gly residues. A compositionally biased stretch (low complexity) spans 197–206 (GGQQRSGKPG). The segment covering 300 to 333 (PRRGGGPGGGPGGGGGFRGRGGRGGTQGAFGRGG) has biased composition (gly residues). The segment covering 334 to 345 (ARGKHRKSKRAK) has biased composition (basic residues). The tr-type G domain maps to 460–632 (PRPPVVTVMG…IVLTADGALE (173 aa)). The interval 469 to 476 (GHVDHGKT) is G1. 469-476 (GHVDHGKT) serves as a coordination point for GTP. Residues 494-498 (GITQH) are G2. Residues 519–522 (DTPG) are G3. Residues 519–523 (DTPGH) and 573–576 (NKVD) each bind GTP. Residues 573–576 (NKVD) form a G4 region. The tract at residues 609 to 611 (SAR) is G5.

Belongs to the TRAFAC class translation factor GTPase superfamily. Classic translation factor GTPase family. IF-2 subfamily.

It is found in the cytoplasm. Its function is as follows. One of the essential components for the initiation of protein synthesis. Protects formylmethionyl-tRNA from spontaneous hydrolysis and promotes its binding to the 30S ribosomal subunits. Also involved in the hydrolysis of GTP during the formation of the 70S ribosomal complex. In Kocuria rhizophila (strain ATCC 9341 / DSM 348 / NBRC 103217 / DC2201), this protein is Translation initiation factor IF-2.